Here is a 156-residue protein sequence, read N- to C-terminus: Ribosomal RNA large subunit methyltransferase H (156 aa).

S-adenosyl-L-methionine is bound by residues leucine 73, glycine 104, and leucine 123 to leucine 128.

This sequence belongs to the RNA methyltransferase RlmH family. Homodimer.

Its subcellular location is the cytoplasm. The catalysed reaction is pseudouridine(1915) in 23S rRNA + S-adenosyl-L-methionine = N(3)-methylpseudouridine(1915) in 23S rRNA + S-adenosyl-L-homocysteine + H(+). In terms of biological role, specifically methylates the pseudouridine at position 1915 (m3Psi1915) in 23S rRNA. The sequence is that of Ribosomal RNA large subunit methyltransferase H from Pectobacterium carotovorum subsp. carotovorum (strain PC1).